The following is a 415-amino-acid chain: Putative F-box protein At5g40050 (415 aa).

The F-box domain occupies 13-59 (IDSISPLPDELLSHILSFLPTKRAASTSILSKRWRTLFPLMNHLCAS).

The chain is Putative F-box protein At5g40050 from Arabidopsis thaliana (Mouse-ear cress).